The primary structure comprises 249 residues: Probable phosphatase VVA0289 (249 aa).

Positions 8, 10, 16, 41, 74, 102, 132, 194, and 196 each coordinate Zn(2+).

It belongs to the PHP family. Requires Zn(2+) as cofactor.

This Vibrio vulnificus (strain YJ016) protein is Probable phosphatase VVA0289.